The following is a 32-amino-acid chain: Dermatoxin-J3 (32 aa).

Gln-32 carries the post-translational modification Glutamine amide.

In terms of tissue distribution, expressed by the skin glands.

It localises to the secreted. Its function is as follows. Antimicrobial peptide. This is Dermatoxin-J3 from Phasmahyla jandaia (Jandaia leaf frog).